The sequence spans 119 residues: Protein Wnt-4 (119 aa).

Serine 1 is lipidated: O-palmitoleoyl serine; by PORCN. Cystine bridges form between cysteine 69–cysteine 100 and cysteine 85–cysteine 95. N-linked (GlcNAc...) asparagine glycosylation is present at asparagine 86.

This sequence belongs to the Wnt family. In terms of processing, palmitoleoylation is required for efficient binding to frizzled receptors. Depalmitoleoylation leads to Wnt signaling pathway inhibition.

The protein resides in the secreted. It localises to the extracellular space. The protein localises to the extracellular matrix. Ligand for members of the frizzled family of seven transmembrane receptors. Plays an important role in embryonic development. The polypeptide is Protein Wnt-4 (WNT-4) (Plestiodon skiltonianus (Western skink)).